The following is a 1160-amino-acid chain: Large proline-rich protein BAG6 (1160 aa).

The 76-residue stretch at 7-82 (IEVTVKTLDS…HLVERPPPQS (76 aa)) folds into the Ubiquitin-like domain. Disordered regions lie at residues 76-114 (ERPP…YTTS), 206-261 (EGQS…HPSP), 367-422 (IPMN…GQGT), 478-547 (ASAG…QTNQ), 563-628 (GDQT…DNLA), 672-711 (SGQP…AETL), 962-1038 (SARR…AEPW), and 1126-1160 (YAQQ…SEDA). The span at 85–94 (PGGGGGGVSG) shows a compositional bias: gly residues. 2 stretches are compositionally biased toward low complexity: residues 95–110 (SSGA…QSSA) and 223–233 (SSSSFSAHPMD). Composition is skewed to polar residues over residues 247–257 (QTEGETQSGPN) and 371–417 (LGST…QQTG). Composition is skewed to low complexity over residues 478–495 (ASAG…AGAQ) and 566–614 (TSTT…STAS). Positions 677-698 (FPSPNQQPPPSQATPPSAPSGP) are enriched in pro residues. Residues 699-708 (APTTAPSGGA) show a composition bias toward low complexity. The segment covering 1132–1146 (SDIKKRLSDDPDYNH) has biased composition (basic and acidic residues).

As to quaternary structure, component of the bag6/bat3 complex.

The protein localises to the cytoplasm. The protein resides in the cytosol. It localises to the nucleus. It is found in the secreted. Its subcellular location is the extracellular exosome. In terms of biological role, ATP-independent molecular chaperone preventing the aggregation of misfolded and hydrophobic patches-containing proteins. Functions as part of a cytosolic protein quality control complex, the bag6/bat3 complex, which maintains these client proteins in a soluble state and participates in their proper delivery to the endoplasmic reticulum or alternatively can promote their sorting to the proteasome where they undergo degradation. The bag6/bat3 complex is involved in the post-translational delivery of tail-anchored/type II transmembrane proteins to the endoplasmic reticulum membrane. Similarly, the bag6/bat3 complex also functions as a sorting platform for proteins of the secretory pathway that are mislocalized to the cytosol either delivering them to the proteasome for degradation or to the endoplasmic reticulum. The bag6/bat3 complex also plays a role in the endoplasmic reticulum-associated degradation (ERAD), a quality control mechanism that eliminates unwanted proteins of the endoplasmic reticulum through their retrotranslocation to the cytosol and their targeting to the proteasome. It maintains these retrotranslocated proteins in an unfolded yet soluble state condition in the cytosol to ensure their proper delivery to the proteasome. Also required for selective ubiquitin-mediated degradation of defective nascent chain polypeptides by the proteasome. Also involved in endoplasmic reticulum stress-induced pre-emptive quality control, a mechanism that selectively attenuates the translocation of newly synthesized proteins into the endoplasmic reticulum and reroutes them to the cytosol for proteasomal degradation. May ensure the proper degradation of these proteins and thereby protects the endoplasmic reticulum from protein overload upon stress. By stabilizing a large spectrum of proteins, may indirectly affect different biological processes including apoptosis. By controlling the steady-state expression of the IGF1R receptor, indirectly regulates the insulin-like growth factor receptor signaling pathway. Functionally, when nuclear, may also act as a component of some chromatin regulator complex. The protein is Large proline-rich protein BAG6 of Danio rerio (Zebrafish).